The chain runs to 289 residues: Orotidine 5'-phosphate decarboxylase (289 aa).

The active-site Proton donor is Lys-97.

The protein belongs to the OMP decarboxylase family. Type 2 subfamily.

It catalyses the reaction orotidine 5'-phosphate + H(+) = UMP + CO2. The protein operates within pyrimidine metabolism; UMP biosynthesis via de novo pathway; UMP from orotate: step 2/2. The protein is Orotidine 5'-phosphate decarboxylase of Petrotoga mobilis (strain DSM 10674 / SJ95).